The sequence spans 135 residues: Mediator of RNA polymerase II transcription subunit 10 (135 aa).

Belongs to the Mediator complex subunit 10 family. As to quaternary structure, component of the Mediator complex, which is composed of MED1, MED4, MED6, MED7, MED8, MED9, MED10, MED11, MED12, MED13, MED13L, MED14, MED15, MED16, MED17, MED18, MED19, MED20, MED21, MED22, MED23, MED24, MED25, MED26, MED27, MED29, MED30, MED31, CCNC, CDK8 and CDC2L6/CDK11. The MED12, MED13, CCNC and CDK8 subunits form a distinct module termed the CDK8 module. Mediator containing the CDK8 module is less active than Mediator lacking this module in supporting transcriptional activation. Individual preparations of the Mediator complex lacking one or more distinct subunits have been variously termed ARC, CRSP, DRIP, PC2, SMCC and TRAP.

The protein resides in the nucleus. In terms of biological role, component of the Mediator complex, a coactivator involved in the regulated transcription of nearly all RNA polymerase II-dependent genes. Mediator functions as a bridge to convey information from gene-specific regulatory proteins to the basal RNA polymerase II transcription machinery. Mediator is recruited to promoters by direct interactions with regulatory proteins and serves as a scaffold for the assembly of a functional preinitiation complex with RNA polymerase II and the general transcription factors. The polypeptide is Mediator of RNA polymerase II transcription subunit 10 (MED10) (Macaca fascicularis (Crab-eating macaque)).